The sequence spans 201 residues: Cytochrome c oxidase assembly protein CtaG (201 aa).

Residues 1–13 are Cytoplasmic-facing; that stretch reads MTDQGENEKKQRR. The helical; Signal-anchor for type II membrane protein transmembrane segment at 14–36 threads the bilayer; the sequence is SNATIAVACLSFFVCMIGAAYAS. Topologically, residues 37–201 are periplasmic; sequence VPLYRIFCQV…KAVGSTRNGG (165 aa).

This sequence belongs to the COX11/CtaG family.

The protein resides in the cell inner membrane. Its function is as follows. Exerts its effect at some terminal stage of cytochrome c oxidase synthesis, probably by being involved in the insertion of the copper B into subunit I. This is Cytochrome c oxidase assembly protein CtaG from Brucella suis (strain ATCC 23445 / NCTC 10510).